Here is a 130-residue protein sequence, read N- to C-terminus: ATP synthase epsilon chain (130 aa).

It belongs to the ATPase epsilon chain family. In terms of assembly, F-type ATPases have 2 components, CF(1) - the catalytic core - and CF(0) - the membrane proton channel. CF(1) has five subunits: alpha(3), beta(3), gamma(1), delta(1), epsilon(1). CF(0) has three main subunits: a, b and c.

The protein localises to the cell membrane. Its function is as follows. Produces ATP from ADP in the presence of a proton gradient across the membrane. The sequence is that of ATP synthase epsilon chain (atpC) from Mycoplasmoides gallisepticum (strain R(low / passage 15 / clone 2)) (Mycoplasma gallisepticum).